Reading from the N-terminus, the 300-residue chain is Mitochondrial GTP/GDP carrier protein 1 (300 aa).

3 Solcar repeats span residues 8–108 (QSGL…KKDF), 117–198 (GKAM…AKEY), and 208–293 (ATWS…LIPR). 6 helical membrane-spanning segments follow: residues 14-34 (LLGSASAGIMEIAVFHPVDTI), 85-101 (QRVYKYGGQPFANEFLN), 122-142 (SAAAGSLIGIGEIVLLPLDVL), 173-189 (GWGWTAARNAPGSFALF), 214-234 (FISSIVGACSSLIVSAPLDVI), and 268-285 (GLTPKLLTTGPKLVFSFA).

It belongs to the mitochondrial carrier (TC 2.A.29) family.

Its subcellular location is the mitochondrion inner membrane. In terms of biological role, mitochondrial GTP/GDP transporter required for GTP uptake and GDP exit from mitochondria. Involved in mitochondrial iron transport and essential for mitochondrial genome maintenance. This chain is Mitochondrial GTP/GDP carrier protein 1 (GGC1), found in Saccharomyces cerevisiae (strain ATCC 204508 / S288c) (Baker's yeast).